The primary structure comprises 73 residues: uncharacterized protein (73 aa).

This is an uncharacterized protein from Dictyostelium discoideum (Social amoeba).